The chain runs to 275 residues: Shikimate dehydrogenase (NADP(+)) (275 aa).

Shikimate is bound by residues 19-21 (SIS) and Thr66. The active-site Proton acceptor is the Lys70. Shikimate-binding residues include Asn91 and Asp106. NADP(+) is bound by residues 129–133 (GAGGA), 153–158 (NRTYGR), and Ile219. Tyr221 is a binding site for shikimate. Gly242 provides a ligand contact to NADP(+).

It belongs to the shikimate dehydrogenase family. Homodimer.

It carries out the reaction shikimate + NADP(+) = 3-dehydroshikimate + NADPH + H(+). It participates in metabolic intermediate biosynthesis; chorismate biosynthesis; chorismate from D-erythrose 4-phosphate and phosphoenolpyruvate: step 4/7. Functionally, involved in the biosynthesis of the chorismate, which leads to the biosynthesis of aromatic amino acids. Catalyzes the reversible NADPH linked reduction of 3-dehydroshikimate (DHSA) to yield shikimate (SA). This chain is Shikimate dehydrogenase (NADP(+)), found in Dictyoglomus thermophilum (strain ATCC 35947 / DSM 3960 / H-6-12).